A 125-amino-acid polypeptide reads, in one-letter code: Small ribosomal subunit protein eS8 (125 aa).

It belongs to the eukaryotic ribosomal protein eS8 family. As to quaternary structure, part of the 30S ribosomal subunit.

This is Small ribosomal subunit protein eS8 from Methanocella arvoryzae (strain DSM 22066 / NBRC 105507 / MRE50).